The primary structure comprises 455 residues: MSEAFDSRASKALPIEVLISPFVRFARMEAASGILLIVSTAAALVWANSPWKSSYDAIWDVPMVAGVGNFLLTESRHHWINDGLMSIFFFLVGLEIKREVLIGELTSLRNAAFPLIAAVGGTVVPAVIYLLCVGGGVAQKGWGIPMATDIAFALGVLILLGNRIPPSLRVFVTALAIVDDIIAVLVIALFYTHEIHLVSLLVALGGVGIAFGFNLLGISKPSVYALIGVCIWAAVLKSGVHATVAGVLLAFTIPARNYLDRDFFVKRGRWLLERFEKSEPHSFESHTAIHTLQHQCDMIESPLHRLEHGLQPWVSFLIMPLFAFSNAGVRFIGNIGVAVKHPVSIGVALGLFLGKPLGIWLFAWLAVKSRVANAPPELSWWQIFGASWICGIGFTMSLFIASLAFGYGNLLDMSKIGTLAASLVAGVCGSVVLWRRSALGTSEPPVSPATTSASV.

11 consecutive transmembrane segments (helical) span residues 31–51 (ASGILLIVSTAAALVWANSPW), 83–103 (GLMSIFFFLVGLEIKREVLIG), 113–133 (FPLIAAVGGTVVPAVIYLLCV), 141–161 (GWGIPMATDIAFALGVLILLG), 170–190 (VFVTALAIVDDIIAVLVIALF), 198–218 (VSLLVALGGVGIAFGFNLLGI), 231–251 (IWAAVLKSGVHATVAGVLLAF), 309–329 (GLQPWVSFLIMPLFAFSNAGV), 345–365 (IGVALGLFLGKPLGIWLFAWL), 383–403 (IFGASWICGIGFTMSLFIASL), and 414–434 (SKIGTLAASLVAGVCGSVVLW).

The protein belongs to the NhaA Na(+)/H(+) (TC 2.A.33) antiporter family.

The protein localises to the cell inner membrane. It carries out the reaction Na(+)(in) + 2 H(+)(out) = Na(+)(out) + 2 H(+)(in). Na(+)/H(+) antiporter that extrudes sodium in exchange for external protons. The protein is Na(+)/H(+) antiporter NhaA of Koribacter versatilis (strain Ellin345).